A 34-amino-acid polypeptide reads, in one-letter code: Kappa-theraphotoxin-Scg1a (34 aa).

3 cysteine pairs are disulfide-bonded: Cys-2–Cys-16, Cys-9–Cys-21, and Cys-15–Cys-28. Residues 4–6 (YLF) form an involved in active face region.

It belongs to the neurotoxin 10 (Hwtx-1) family. 09 (HaTx) subfamily. Expressed by the venom gland.

The protein localises to the secreted. Reversibly inhibits potassium currents in oocytes expressing Kv2.1/KCNB1 channels (Kd=2.7 uM). Acts by shifting activation of the channel to more depolarized voltages. The toxin may bind to the S3b-S4 helices of the voltage sensor paddle. One, two, three or four toxin molecules may bind the Kv2.1/KCNB1 channel. It shows low to moderate affinity for lipid bilayers. It partitions into the bilayer membrane, where it stabilizes at the water/membrane interface. The chain is Kappa-theraphotoxin-Scg1a from Stromatopelma calceatum griseipes (Feather leg baboon tarantula).